Here is a 67-residue protein sequence, read N- to C-terminus: Archaeal histone HAN1 subunit A (67 aa).

2 interaction with DNA regions span residues 20–22 (RVS) and 54–57 (KTVK).

Belongs to the archaeal histone HMF family. Heterodimer. Dimers then assemble into higher oligomers, with the DNA wrapped around the protein core.

It is found in the cytoplasm. Its subcellular location is the chromosome. In terms of biological role, binds and compact DNA (95 to 150 base pairs) to form nucleosome-like structures that contain positive DNA supercoils. Increases the resistance of DNA to thermal denaturation (in vitro). This chain is Archaeal histone HAN1 subunit A (han1A), found in Thermococcus zilligii.